A 341-amino-acid chain; its full sequence is L-threonine 3-dehydrogenase (341 aa).

Cysteine 38 provides a ligand contact to Zn(2+). Residues threonine 40 and histidine 43 each act as charge relay system in the active site. The Zn(2+) site is built by histidine 63, glutamate 64, cysteine 93, cysteine 96, cysteine 99, and cysteine 107. Residues isoleucine 175, aspartate 195, arginine 200, 262–264 (LGI), and 286–287 (IY) each bind NAD(+).

It belongs to the zinc-containing alcohol dehydrogenase family. As to quaternary structure, homotetramer. It depends on Zn(2+) as a cofactor.

The protein localises to the cytoplasm. The enzyme catalyses L-threonine + NAD(+) = (2S)-2-amino-3-oxobutanoate + NADH + H(+). It functions in the pathway amino-acid degradation; L-threonine degradation via oxydo-reductase pathway; glycine from L-threonine: step 1/2. Functionally, catalyzes the NAD(+)-dependent oxidation of L-threonine to 2-amino-3-ketobutyrate. The sequence is that of L-threonine 3-dehydrogenase from Photorhabdus laumondii subsp. laumondii (strain DSM 15139 / CIP 105565 / TT01) (Photorhabdus luminescens subsp. laumondii).